A 285-amino-acid chain; its full sequence is Probable endonuclease 4 (285 aa).

Residues His69, His109, Glu145, Asp179, His182, His216, Asp229, His231, and Glu261 each contribute to the Zn(2+) site.

The protein belongs to the AP endonuclease 2 family. Zn(2+) serves as cofactor.

The enzyme catalyses Endonucleolytic cleavage to 5'-phosphooligonucleotide end-products.. Functionally, endonuclease IV plays a role in DNA repair. It cleaves phosphodiester bonds at apurinic or apyrimidinic (AP) sites, generating a 3'-hydroxyl group and a 5'-terminal sugar phosphate. This is Probable endonuclease 4 from Salmonella typhimurium (strain LT2 / SGSC1412 / ATCC 700720).